We begin with the raw amino-acid sequence, 259 residues long: Protein unc-50 homolog A (259 aa).

Topologically, residues 1-82 are cytoplasmic; the sequence is MLPTTSVSPR…TKDQWARDDP (82 aa). A helical membrane pass occupies residues 83 to 103; it reads AFLVLLSIWLCVSTVGFGFVL. At 104 to 112 the chain is on the lumenal side; it reads DMSFFETFK. A helical transmembrane segment spans residues 113–133; sequence LLLWVVFIDCVGVGLLIATLM. Residues 134–158 are Cytoplasmic-facing; sequence WFVSNKYMVKRQGKDYDVEWGYTFD. A helical transmembrane segment spans residues 159–179; that stretch reads VHLNAFYPLLVILHFIQLFFI. At 180 to 181 the chain is on the lumenal side; it reads NH. The chain crosses the membrane as a helical span at residues 182–202; sequence VILSGWFIGYFVGNTIWLIAI. At 203 to 222 the chain is on the cytoplasmic side; sequence GYYIYITFLGYSALPFLKNT. Residues 223 to 243 traverse the membrane as a helical segment; sequence VILLYPFAALALLYVLSLALG. The Lumenal portion of the chain corresponds to 244–259; sequence WNFTEKLCLFYKYRVR.

Belongs to the unc-50 family.

The protein localises to the nucleus inner membrane. The protein resides in the golgi apparatus membrane. Functionally, involved in the cell surface expression of neuronal nicotinic receptors. Binds RNA. The sequence is that of Protein unc-50 homolog A (unc50-a) from Xenopus laevis (African clawed frog).